Consider the following 62-residue polypeptide: Large ribosomal subunit protein uL29 (62 aa).

The protein belongs to the universal ribosomal protein uL29 family.

The polypeptide is Large ribosomal subunit protein uL29 (Laribacter hongkongensis (strain HLHK9)).